The primary structure comprises 119 residues: MKKTYRVKCEKDFQAIFKDGKSTANRKFVIYHLNRGQDHFRVGISVGKKIGNAVTRNAVKRKIRHVIMALGYQLKSEDFVVIARKGVESLEYQELQQNLHHVLKLAQLLEKGFESEEKH.

The protein belongs to the RnpA family. As to quaternary structure, consists of a catalytic RNA component (M1 or rnpB) and a protein subunit.

It carries out the reaction Endonucleolytic cleavage of RNA, removing 5'-extranucleotides from tRNA precursor.. Functionally, RNaseP catalyzes the removal of the 5'-leader sequence from pre-tRNA to produce the mature 5'-terminus. It can also cleave other RNA substrates such as 4.5S RNA. The protein component plays an auxiliary but essential role in vivo by binding to the 5'-leader sequence and broadening the substrate specificity of the ribozyme. The chain is Ribonuclease P protein component from Streptococcus pyogenes serotype M12 (strain MGAS2096).